Consider the following 266-residue polypeptide: Phosphate import ATP-binding protein PstB 2 (266 aa).

The ABC transporter domain occupies 13–252 (LEAQGVNVYY…GPTEEIFQNP (240 aa)). An ATP-binding site is contributed by 45-52 (GPSGCGKS).

It belongs to the ABC transporter superfamily. Phosphate importer (TC 3.A.1.7) family. The complex is composed of two ATP-binding proteins (PstB), two transmembrane proteins (PstC and PstA) and a solute-binding protein (PstS).

It is found in the cell inner membrane. The enzyme catalyses phosphate(out) + ATP + H2O = ADP + 2 phosphate(in) + H(+). Functionally, part of the ABC transporter complex PstSACB involved in phosphate import. Responsible for energy coupling to the transport system. The polypeptide is Phosphate import ATP-binding protein PstB 2 (Synechocystis sp. (strain ATCC 27184 / PCC 6803 / Kazusa)).